A 475-amino-acid polypeptide reads, in one-letter code: Methyltransferase-like protein 25B (475 aa).

A coiled-coil region spans residues 186–210 (QRLVERAQRLDQELLQTLEKEEKRN). Residues 406-426 (VVAFFSLALLLAPLVETLILL) form a helical membrane-spanning segment.

Belongs to the METTL25 family.

The protein resides in the membrane. The protein is Methyltransferase-like protein 25B of Bos taurus (Bovine).